A 326-amino-acid chain; its full sequence is Metal-binding protein YtgA (326 aa).

An N-terminal signal peptide occupies residues 1 to 21 (MSFFHTRKYKLILRGLLCLAG). The Fe(2+) site is built by H75, H141, H207, and D299.

It belongs to the bacterial solute-binding protein 9 family. Monomer.

It localises to the periplasm. Part of the ATP-binding cassette (ABC) transport system YtgABCD involved in metal import. Binds Fe(2+), Mn(2+) and Ni(2+), with a preference for Fe(2+) and delivers them to the membrane permease for translocation into the cytoplasm. The protein is Metal-binding protein YtgA of Chlamydia trachomatis serovar D (strain ATCC VR-885 / DSM 19411 / UW-3/Cx).